Reading from the N-terminus, the 72-residue chain is Translation initiation factor IF-1 (72 aa).

An S1-like domain is found at 1 to 72 (MSKEDVIEVE…SRGRIVYRFK (72 aa)).

This sequence belongs to the IF-1 family. As to quaternary structure, component of the 30S ribosomal translation pre-initiation complex which assembles on the 30S ribosome in the order IF-2 and IF-3, IF-1 and N-formylmethionyl-tRNA(fMet); mRNA recruitment can occur at any time during PIC assembly.

The protein resides in the cytoplasm. Functionally, one of the essential components for the initiation of protein synthesis. Stabilizes the binding of IF-2 and IF-3 on the 30S subunit to which N-formylmethionyl-tRNA(fMet) subsequently binds. Helps modulate mRNA selection, yielding the 30S pre-initiation complex (PIC). Upon addition of the 50S ribosomal subunit IF-1, IF-2 and IF-3 are released leaving the mature 70S translation initiation complex. This is Translation initiation factor IF-1 from Desulfitobacterium hafniense (strain Y51).